A 458-amino-acid chain; its full sequence is Serine--tRNA ligase (458 aa).

252 to 254 (TAE) is a binding site for L-serine. Residues 283-285 (RKE) and Val299 each bind ATP. Glu306 serves as a coordination point for L-serine. 370–373 (EMVS) is a binding site for ATP. Thr405 contacts L-serine.

The protein belongs to the class-II aminoacyl-tRNA synthetase family. Type-1 seryl-tRNA synthetase subfamily. As to quaternary structure, homodimer. The tRNA molecule binds across the dimer.

The protein resides in the cytoplasm. The catalysed reaction is tRNA(Ser) + L-serine + ATP = L-seryl-tRNA(Ser) + AMP + diphosphate + H(+). It carries out the reaction tRNA(Sec) + L-serine + ATP = L-seryl-tRNA(Sec) + AMP + diphosphate + H(+). The protein operates within aminoacyl-tRNA biosynthesis; selenocysteinyl-tRNA(Sec) biosynthesis; L-seryl-tRNA(Sec) from L-serine and tRNA(Sec): step 1/1. Functionally, catalyzes the attachment of serine to tRNA(Ser). Is also able to aminoacylate tRNA(Sec) with serine, to form the misacylated tRNA L-seryl-tRNA(Sec), which will be further converted into selenocysteinyl-tRNA(Sec). In Sulfolobus acidocaldarius (strain ATCC 33909 / DSM 639 / JCM 8929 / NBRC 15157 / NCIMB 11770), this protein is Serine--tRNA ligase.